The following is a 287-amino-acid chain: Pyridoxal kinase PdxY (287 aa).

Residues S9 and 44 to 45 (TQ) contribute to the substrate site. ATP contacts are provided by D111, E147, and K180. Position 221 (D221) interacts with substrate.

Belongs to the pyridoxine kinase family. PdxY subfamily. In terms of assembly, homodimer. It depends on Mg(2+) as a cofactor.

It carries out the reaction pyridoxal + ATP = pyridoxal 5'-phosphate + ADP + H(+). The protein operates within cofactor metabolism; pyridoxal 5'-phosphate salvage; pyridoxal 5'-phosphate from pyridoxal: step 1/1. In terms of biological role, pyridoxal kinase involved in the salvage pathway of pyridoxal 5'-phosphate (PLP). Catalyzes the phosphorylation of pyridoxal to PLP. This is Pyridoxal kinase PdxY from Paraburkholderia phymatum (strain DSM 17167 / CIP 108236 / LMG 21445 / STM815) (Burkholderia phymatum).